The chain runs to 155 residues: SsrA-binding protein (155 aa).

This sequence belongs to the SmpB family.

It localises to the cytoplasm. In terms of biological role, required for rescue of stalled ribosomes mediated by trans-translation. Binds to transfer-messenger RNA (tmRNA), required for stable association of tmRNA with ribosomes. tmRNA and SmpB together mimic tRNA shape, replacing the anticodon stem-loop with SmpB. tmRNA is encoded by the ssrA gene; the 2 termini fold to resemble tRNA(Ala) and it encodes a 'tag peptide', a short internal open reading frame. During trans-translation Ala-aminoacylated tmRNA acts like a tRNA, entering the A-site of stalled ribosomes, displacing the stalled mRNA. The ribosome then switches to translate the ORF on the tmRNA; the nascent peptide is terminated with the 'tag peptide' encoded by the tmRNA and targeted for degradation. The ribosome is freed to recommence translation, which seems to be the essential function of trans-translation. This Streptococcus agalactiae serotype Ia (strain ATCC 27591 / A909 / CDC SS700) protein is SsrA-binding protein.